We begin with the raw amino-acid sequence, 442 residues long: D(2) dopamine receptor A (442 aa).

Residues 1–31 (MDPQNLSMYNDDINNGTNGTAVDQKPHYNYY) are Extracellular-facing. Residues Asn-5, Asn-15, and Asn-18 are each glycosylated (N-linked (GlcNAc...) asparagine). The chain crosses the membrane as a helical span at residues 32-54 (AMLLTLLVFVIVFGNVLVCIAVS). Over 55-64 (REKALQTTTN) the chain is Cytoplasmic. The chain crosses the membrane as a helical span at residues 65–87 (YLIVSLAVADLLVATLVMPWAVY). Over 88–102 (MEVVGEWRFSRIHCD) the chain is Extracellular. Cys-101 and Cys-176 are joined by a disulfide. A helical membrane pass occupies residues 103 to 124 (IFVTLDVMMCTASILNLCAISI). Residues 125 to 145 (DRYTAVAMPMLYNTRYSSKRR) lie on the Cytoplasmic side of the membrane. A helical transmembrane segment spans residues 146-166 (VTVMISVVWVLSFAISCPLLF). The Extracellular segment spans residues 167 to 182 (GLNNTGSKVCIIDNPA). Residues 183–207 (FVIYSSIVSFYVPFIVTLLVYVQIY) traverse the membrane as a helical segment. At 208–372 (IVLRKRRKRV…SQHKEKKATQ (165 aa)) the chain is on the cytoplasmic side. The tract at residues 273 to 335 (DMEMEMMSST…KNGHPKDSTK (63 aa)) is disordered. Positions 304–318 (ATSNQCKNASLTSPV) are enriched in polar residues. Positions 322–335 (YKAEKNGHPKDSTK) are enriched in basic and acidic residues. A helical transmembrane segment spans residues 373 to 394 (MLAIVLGVFIICWLPFFIIHIL). At 395-408 (NMHCNCNIPQALYS) the chain is on the extracellular side. A disulfide bond links Cys-398 and Cys-400. The helical transmembrane segment at 409–430 (AFTWLGYVNSAVNPIIYTTFNV) threads the bilayer. The Cytoplasmic segment spans residues 431–442 (EFRKAFIKILHC). Cys-442 carries S-palmitoyl cysteine lipidation.

It belongs to the G-protein coupled receptor 1 family. In terms of processing, palmitoylated. Palmitoylation is probably required for proper localization to the plasma membrane and stability of the receptor. Brain; pituitary.

It is found in the cell membrane. The protein localises to the golgi apparatus membrane. Its function is as follows. This is one of the five types (D1 to D5) of receptors for dopamine. The activity of this receptor is mediated by G proteins which inhibits adenylyl cyclase. In Xenopus D2R is involved in the regulation of the melanotrope cells of the intermediate pituitary during background adaptation of the animal. The protein is D(2) dopamine receptor A (drd2-a) of Xenopus laevis (African clawed frog).